Here is a 303-residue protein sequence, read N- to C-terminus: Putative ring-cleaving dioxygenase MhqE (303 aa).

2 VOC domains span residues 5 to 129 (GLHH…IMED) and 150 to 266 (GMKG…IATD). Fe cation is bound by residues His-8, His-215, and Glu-262.

The protein belongs to the extradiol ring-cleavage dioxygenase family. Fe(2+) serves as cofactor.

It localises to the cytoplasm. In terms of biological role, putative ring-cleavage dioxygenase that may contribute to the degradation of aromatic compounds. The sequence is that of Putative ring-cleaving dioxygenase MhqE (mhqE) from Bacillus subtilis (strain 168).